The following is a 336-amino-acid chain: Phospho-N-acetylmuramoyl-pentapeptide-transferase (336 aa).

The next 10 helical transmembrane spans lie at 3 to 23, 53 to 73, 78 to 98, 118 to 138, 143 to 163, 174 to 194, 200 to 220, 226 to 246, 251 to 271, and 316 to 336; these read LTLI…PYFI, GGTV…LFSI, SLAL…IGFL, LALQ…PSGI, VFGY…FWVV, GIDG…GVIA, FDVL…FCFN, VFMG…ISIA, WTLL…MLQV, and AFLW…LYVF.

Belongs to the glycosyltransferase 4 family. MraY subfamily. Mg(2+) serves as cofactor.

It is found in the cell membrane. The catalysed reaction is UDP-N-acetyl-alpha-D-muramoyl-L-alanyl-gamma-D-glutamyl-L-lysyl-D-alanyl-D-alanine + di-trans,octa-cis-undecaprenyl phosphate = Mur2Ac(oyl-L-Ala-gamma-D-Glu-L-Lys-D-Ala-D-Ala)-di-trans,octa-cis-undecaprenyl diphosphate + UMP. It participates in cell wall biogenesis; peptidoglycan biosynthesis. Its function is as follows. Catalyzes the initial step of the lipid cycle reactions in the biosynthesis of the cell wall peptidoglycan: transfers peptidoglycan precursor phospho-MurNAc-pentapeptide from UDP-MurNAc-pentapeptide onto the lipid carrier undecaprenyl phosphate, yielding undecaprenyl-pyrophosphoryl-MurNAc-pentapeptide, known as lipid I. This chain is Phospho-N-acetylmuramoyl-pentapeptide-transferase, found in Streptococcus pyogenes serotype M3 (strain ATCC BAA-595 / MGAS315).